The chain runs to 598 residues: Elongation factor 4 (598 aa).

The 183-residue stretch at 5-187 folds into the tr-type G domain; it reads ANIRNFSIIA…ALVEFIPAPT (183 aa). GTP-binding positions include 17-22 and 134-137; these read DHGKST and NKID.

This sequence belongs to the TRAFAC class translation factor GTPase superfamily. Classic translation factor GTPase family. LepA subfamily.

The protein localises to the cell inner membrane. The enzyme catalyses GTP + H2O = GDP + phosphate + H(+). In terms of biological role, required for accurate and efficient protein synthesis under certain stress conditions. May act as a fidelity factor of the translation reaction, by catalyzing a one-codon backward translocation of tRNAs on improperly translocated ribosomes. Back-translocation proceeds from a post-translocation (POST) complex to a pre-translocation (PRE) complex, thus giving elongation factor G a second chance to translocate the tRNAs correctly. Binds to ribosomes in a GTP-dependent manner. In Psychrobacter arcticus (strain DSM 17307 / VKM B-2377 / 273-4), this protein is Elongation factor 4.